Reading from the N-terminus, the 308-residue chain is Cell division protein ZipA (308 aa).

Over 1-5 (MQELR) the chain is Periplasmic. Residues 6 to 26 (LVLILVGALAIAALLFHGLWT) form a helical membrane-spanning segment. Over 27 to 308 (SRKETSSKFG…YKQRVKVFCN (282 aa)) the chain is Cytoplasmic. The segment at 43 to 90 (FDSESEDEQPTPARGFEQPKESVVDVRQERKEPAFGRDEPNLSQDPLF) is disordered. Positions 59 to 82 (EQPKESVVDVRQERKEPAFGRDEP) are enriched in basic and acidic residues.

This sequence belongs to the ZipA family. Interacts with FtsZ via their C-terminal domains.

It is found in the cell inner membrane. Essential cell division protein that stabilizes the FtsZ protofilaments by cross-linking them and that serves as a cytoplasmic membrane anchor for the Z ring. Also required for the recruitment to the septal ring of downstream cell division proteins. The polypeptide is Cell division protein ZipA (Aliivibrio salmonicida (strain LFI1238) (Vibrio salmonicida (strain LFI1238))).